A 104-amino-acid chain; its full sequence is PLAT domain-containing protein 3 (104 aa).

The 104-residue stretch at 1–104 folds into the PLAT domain; it reads MSLRLYDSYG…LARDASPYEL (104 aa).

The polypeptide is PLAT domain-containing protein 3 (Arabidopsis thaliana (Mouse-ear cress)).